A 217-amino-acid polypeptide reads, in one-letter code: Uracil-DNA glycosylase (217 aa).

Aspartate 62 functions as the Proton acceptor in the catalytic mechanism.

It belongs to the uracil-DNA glycosylase (UDG) superfamily. UNG family.

Its subcellular location is the cytoplasm. The enzyme catalyses Hydrolyzes single-stranded DNA or mismatched double-stranded DNA and polynucleotides, releasing free uracil.. Functionally, excises uracil residues from the DNA which can arise as a result of misincorporation of dUMP residues by DNA polymerase or due to deamination of cytosine. In Streptococcus gordonii (strain Challis / ATCC 35105 / BCRC 15272 / CH1 / DL1 / V288), this protein is Uracil-DNA glycosylase.